Consider the following 91-residue polypeptide: Putative ribonuclease inhibitor YrdF (91 aa).

This sequence belongs to the barstar family.

It is found in the cytoplasm. This is Putative ribonuclease inhibitor YrdF (yrdF) from Bacillus subtilis (strain 168).